The chain runs to 444 residues: Probable D-serine dehydratase (444 aa).

The residue at position 118 (Lys118) is an N6-(pyridoxal phosphate)lysine.

This sequence belongs to the serine/threonine dehydratase family. DsdA subfamily. Pyridoxal 5'-phosphate is required as a cofactor.

The enzyme catalyses D-serine = pyruvate + NH4(+). This Acinetobacter baumannii (strain AB0057) protein is Probable D-serine dehydratase.